The primary structure comprises 694 residues: uncharacterized protein (694 aa).

Residues 17–168 form the Resolvase/invertase-type recombinase catalytic domain; sequence DAFLYVRQSS…GGILNKARRG (152 aa). Ser-25 functions as the O-(5'-phospho-DNA)-serine intermediate in the catalytic mechanism. The segment at residues 175–316 is a DNA-binding region (recombinase); that stretch reads PIGLVYTPDA…QAALEQNATG (142 aa). Residues 386-406 form a helical membrane-spanning segment; sequence AVSALLLEVMAPAAIDVALAV.

It localises to the membrane. This is an uncharacterized protein from Sinorhizobium fredii (strain NBRC 101917 / NGR234).